The primary structure comprises 155 residues: Large ribosomal subunit protein eL24 (155 aa).

The span at 93–123 shows a compositional bias: basic and acidic residues; it reads KRNARPETRNATRAKHAEAAKERKEKEAERR. Positions 93–155 are disordered; sequence KRNARPETRN…SAPKVQATSR (63 aa).

Belongs to the eukaryotic ribosomal protein eL24 family.

The protein is Large ribosomal subunit protein eL24 (RPL24) of Yarrowia lipolytica (strain CLIB 122 / E 150) (Yeast).